Reading from the N-terminus, the 256-residue chain is Chlorophyll a-b binding protein CP24 10B, chloroplastic (256 aa).

A chloroplast-targeting transit peptide spans 1–45 (MTTTSATAVLNGLSSSFLTGGKKTQALLGAHVTARVTTPKRFVVA). 2 consecutive transmembrane segments (helical) span residues 106–126 (WAMA…IPWF) and 134–154 (AIAP…MGWV).

It belongs to the ELIP/psbS family.

It localises to the plastid. It is found in the chloroplast thylakoid membrane. The chain is Chlorophyll a-b binding protein CP24 10B, chloroplastic (CAP10B) from Solanum lycopersicum (Tomato).